Reading from the N-terminus, the 290-residue chain is Protein MGF 110-9L (290 aa).

3 helical membrane-spanning segments follow: residues methionine 1–asparagine 19, valine 128–isoleucine 148, and leucine 163–asparagine 183. N-linked (GlcNAc...) asparagine; by host glycans are attached at residues asparagine 242 and asparagine 267.

The protein belongs to the asfivirus MGF 110 family.

It is found in the host membrane. Its function is as follows. Plays a role in virus cell tropism, and may be required for efficient virus replication in macrophages. This chain is Protein MGF 110-9L, found in Ornithodoros (relapsing fever ticks).